A 378-amino-acid polypeptide reads, in one-letter code: Ribosomal RNA large subunit methyltransferase G (378 aa).

Belongs to the methyltransferase superfamily. RlmG family.

The protein localises to the cytoplasm. It carries out the reaction guanosine(1835) in 23S rRNA + S-adenosyl-L-methionine = N(2)-methylguanosine(1835) in 23S rRNA + S-adenosyl-L-homocysteine + H(+). Specifically methylates the guanine in position 1835 (m2G1835) of 23S rRNA. This Salmonella newport (strain SL254) protein is Ribosomal RNA large subunit methyltransferase G.